Here is a 506-residue protein sequence, read N- to C-terminus: MSGVSSGEVLKILRERIENFGGPVKAGSVGEVLSVKDGIAVVYGLHGAGFGETVAFASGVRGVISGLESDIASVVIFGEDREVKEGDSVECTGELMKVPVGFSLLGRVVSPLGMPLDGEGAISGCDGENPVEVKAPGIMARQPVSEPLQTGIKTIDMLIPIGRGQRELIIGDRKTGKTAIALDTIINQKRYNDRAASEKDKVYCIYVAIGQKNSSIARVVSKLCEAGAADYTIVVATGASDSVPLQYLAPYAACAMGEFFRDNGMHCLIVYDDLSKHAVAYRQMSLLLRRPPGREAYPGDVFYIHSRLLERAAKLSDALGGGSLTALPIIETQAGDVSAYIPTNVISITDGQIFLESELFHKGFRPAINVGLSVSRVGSAAQVKAVKKVAGSMKLSLAQYRELEDFARFGSDLDASSQAMLEKGRRMIELLKQGQYSPLSVEEQVAVMLAGSDSCIDAIPVGDMCRFERGLLEKLRIDHGDLMACLLEDDVRSKLLEVIRGFAVSF.

171–178 (GDRKTGKT) lines the ATP pocket.

Belongs to the ATPase alpha/beta chains family. As to quaternary structure, F-type ATPases have 2 components, CF(1) - the catalytic core - and CF(0) - the membrane proton channel. CF(1) has five subunits: alpha(3), beta(3), gamma(1), delta(1), epsilon(1). CF(0) has three main subunits: a(1), b(2) and c(9-12). The alpha and beta chains form an alternating ring which encloses part of the gamma chain. CF(1) is attached to CF(0) by a central stalk formed by the gamma and epsilon chains, while a peripheral stalk is formed by the delta and b chains.

The protein localises to the cell inner membrane. It catalyses the reaction ATP + H2O + 4 H(+)(in) = ADP + phosphate + 5 H(+)(out). Functionally, produces ATP from ADP in the presence of a proton gradient across the membrane. The alpha chain is a regulatory subunit. The chain is ATP synthase subunit alpha from Anaplasma phagocytophilum (strain HZ).